Consider the following 184-residue polypeptide: Probable RNA 2'-phosphotransferase (184 aa).

Belongs to the KptA/TPT1 family.

Its function is as follows. Removes the 2'-phosphate from RNA via an intermediate in which the phosphate is ADP-ribosylated by NAD followed by a presumed transesterification to release the RNA and generate ADP-ribose 1''-2''-cyclic phosphate (APPR&gt;P). May function as an ADP-ribosylase. This is Probable RNA 2'-phosphotransferase from Escherichia coli O8 (strain IAI1).